Here is a 153-residue protein sequence, read N- to C-terminus: Interleukin-4 (153 aa).

Positions 1 to 24 (MGLTSQLLPPLFFLLACAGNFAHG) are cleaved as a signal peptide. Intrachain disulfides connect Cys-27/Cys-151, Cys-48/Cys-89, and Cys-70/Cys-123. Residue Asn-62 is glycosylated (N-linked (GlcNAc...) asparagine). An N-linked (GlcNAc...) asparagine glycan is attached at Asn-129.

This sequence belongs to the IL-4/IL-13 family.

Its subcellular location is the secreted. Functionally, participates in at least several B-cell activation processes as well as of other cell types. It is a costimulator of DNA-synthesis. It induces the expression of class II MHC molecules on resting B-cells. It enhances both secretion and cell surface expression of IgE and IgG1. It also regulates the expression of the low affinity Fc receptor for IgE (CD23) on both lymphocytes and monocytes. Positively regulates IL31RA expression in macrophages. Stimulates autophagy in dendritic cells by interfering with mTORC1 signaling and through the induction of RUFY4. The protein is Interleukin-4 (IL4) of Macaca mulatta (Rhesus macaque).